The following is a 92-amino-acid chain: N(2)-fixation sustaining protein CowN (92 aa).

This sequence belongs to the CowN family.

Functionally, is required to sustain N(2)-dependent growth in the presence of low levels of carbon monoxide (CO). Probably acts by protecting the N(2) fixation ability of the nitrogenase complex, which is inactivated in the presence of CO. The chain is N(2)-fixation sustaining protein CowN from Rhodopseudomonas palustris (strain HaA2).